Reading from the N-terminus, the 409-residue chain is Multifunctional CCA protein (409 aa).

Residues G8 and R11 each contribute to the ATP site. Residues G8 and R11 each coordinate CTP. Mg(2+) is bound by residues D21 and D23. 3 residues coordinate ATP: R91, R137, and R140. CTP contacts are provided by R91, R137, and R140. The HD domain occupies 228-329; it reads TGVHTLSVLE…LELLQSFDVY (102 aa).

The protein belongs to the tRNA nucleotidyltransferase/poly(A) polymerase family. Bacterial CCA-adding enzyme type 1 subfamily. As to quaternary structure, monomer. Can also form homodimers and oligomers. The cofactor is Mg(2+). Ni(2+) is required as a cofactor.

The catalysed reaction is a tRNA precursor + 2 CTP + ATP = a tRNA with a 3' CCA end + 3 diphosphate. The enzyme catalyses a tRNA with a 3' CCA end + 2 CTP + ATP = a tRNA with a 3' CCACCA end + 3 diphosphate. In terms of biological role, catalyzes the addition and repair of the essential 3'-terminal CCA sequence in tRNAs without using a nucleic acid template. Adds these three nucleotides in the order of C, C, and A to the tRNA nucleotide-73, using CTP and ATP as substrates and producing inorganic pyrophosphate. tRNA 3'-terminal CCA addition is required both for tRNA processing and repair. Also involved in tRNA surveillance by mediating tandem CCA addition to generate a CCACCA at the 3' terminus of unstable tRNAs. While stable tRNAs receive only 3'-terminal CCA, unstable tRNAs are marked with CCACCA and rapidly degraded. The polypeptide is Multifunctional CCA protein (Pseudomonas fluorescens (strain SBW25)).